The chain runs to 160 residues: MRTAAGAVSPDSRPETRRQTRKNEEAAWGPRVCRAEREDNRKCPPSILKRSRPEHHRPEAKPQRTSRRVWFREPPAVTVHYIADKNATATVRVPGRPRPHGGSLLLQLCVCVLLVLALGLYCGRAKPVATALEDLRARLLGLVLHLRHVALTCWRGLLRL.

Residues 1–69 form a disordered region; the sequence is MRTAAGAVSP…AKPQRTSRRV (69 aa). Basic and acidic residues-rich tracts occupy residues 12-25 and 33-42; these read SRPETRRQTRKNEE and CRAEREDNRK. Residues 101 to 121 form a helical membrane-spanning segment; it reads GGSLLLQLCVCVLLVLALGLY.

It is found in the cell membrane. In Homo sapiens (Human), this protein is Nutritionally-regulated adipose and cardiac enriched protein homolog (NRAC).